The primary structure comprises 427 residues: Diaminobutyrate--2-oxoglutarate transaminase (427 aa).

The residue at position 269 (Lys-269) is an N6-(pyridoxal phosphate)lysine.

This sequence belongs to the class-III pyridoxal-phosphate-dependent aminotransferase family. Pyridoxal 5'-phosphate serves as cofactor.

It catalyses the reaction L-2,4-diaminobutanoate + 2-oxoglutarate = L-aspartate 4-semialdehyde + L-glutamate. The protein operates within amine and polyamine biosynthesis; ectoine biosynthesis; L-ectoine from L-aspartate 4-semialdehyde: step 1/3. Functionally, catalyzes reversively the conversion of L-aspartate beta-semialdehyde (ASA) to L-2,4-diaminobutyrate (DABA) by transamination with L-glutamate. In Halalkalibacterium halodurans (strain ATCC BAA-125 / DSM 18197 / FERM 7344 / JCM 9153 / C-125) (Bacillus halodurans), this protein is Diaminobutyrate--2-oxoglutarate transaminase (ectB).